Reading from the N-terminus, the 340-residue chain is Zinc finger protein 367 (340 aa).

Positions 101–140 (GAPQSSASVAAVSGGEDEEEASSPDSGHLKDGIRRGRPRA) are disordered. The span at 127 to 140 (GHLKDGIRRGRPRA) shows a compositional bias: basic and acidic residues. 2 C2H2-type zinc fingers span residues 157–179 (IRCN…KRTH) and 185–209 (YLCD…QRLH). Residues 280-317 (KGKLVQKADQEQQDPLEYLQSDEEDDEKSGAQRRLQEQ) are disordered. Positions 299–332 (QSDEEDDEKSGAQRRLQEQRERLHGALALIELAN) form a coiled coil. A Phosphoserine modification is found at Ser300. The span at 307–317 (KSGAQRRLQEQ) shows a compositional bias: basic and acidic residues.

The protein belongs to the krueppel C2H2-type zinc-finger protein family. In terms of tissue distribution, expressed in bone marrow and ovary.

It is found in the nucleus. Its function is as follows. Transcriptional activator. Isoform 1 may be involved in transcriptional activation of erythroid genes. The sequence is that of Zinc finger protein 367 (Znf367) from Mus musculus (Mouse).